A 65-amino-acid polypeptide reads, in one-letter code: Translational regulator CsrA (65 aa).

Belongs to the CsrA/RsmA family. Homodimer; the beta-strands of each monomer intercalate to form a hydrophobic core, while the alpha-helices form wings that extend away from the core.

It is found in the cytoplasm. A translational regulator that binds mRNA to regulate translation initiation and/or mRNA stability. Usually binds in the 5'-UTR at or near the Shine-Dalgarno sequence preventing ribosome-binding, thus repressing translation. Its main target seems to be the major flagellin gene, while its function is anatagonized by FliW. This Bordetella petrii (strain ATCC BAA-461 / DSM 12804 / CCUG 43448) protein is Translational regulator CsrA.